Here is a 95-residue protein sequence, read N- to C-terminus: Aspartyl/glutamyl-tRNA(Asn/Gln) amidotransferase subunit C (95 aa).

Belongs to the GatC family. Heterotrimer of A, B and C subunits.

It carries out the reaction L-glutamyl-tRNA(Gln) + L-glutamine + ATP + H2O = L-glutaminyl-tRNA(Gln) + L-glutamate + ADP + phosphate + H(+). The enzyme catalyses L-aspartyl-tRNA(Asn) + L-glutamine + ATP + H2O = L-asparaginyl-tRNA(Asn) + L-glutamate + ADP + phosphate + 2 H(+). Its function is as follows. Allows the formation of correctly charged Asn-tRNA(Asn) or Gln-tRNA(Gln) through the transamidation of misacylated Asp-tRNA(Asn) or Glu-tRNA(Gln) in organisms which lack either or both of asparaginyl-tRNA or glutaminyl-tRNA synthetases. The reaction takes place in the presence of glutamine and ATP through an activated phospho-Asp-tRNA(Asn) or phospho-Glu-tRNA(Gln). This is Aspartyl/glutamyl-tRNA(Asn/Gln) amidotransferase subunit C from Rhizobium etli (strain CIAT 652).